The following is a 236-amino-acid chain: Phosphoribosylaminoimidazole-succinocarboxamide synthase (236 aa).

Belongs to the SAICAR synthetase family.

It carries out the reaction 5-amino-1-(5-phospho-D-ribosyl)imidazole-4-carboxylate + L-aspartate + ATP = (2S)-2-[5-amino-1-(5-phospho-beta-D-ribosyl)imidazole-4-carboxamido]succinate + ADP + phosphate + 2 H(+). It participates in purine metabolism; IMP biosynthesis via de novo pathway; 5-amino-1-(5-phospho-D-ribosyl)imidazole-4-carboxamide from 5-amino-1-(5-phospho-D-ribosyl)imidazole-4-carboxylate: step 1/2. The sequence is that of Phosphoribosylaminoimidazole-succinocarboxamide synthase from Pseudomonas entomophila (strain L48).